A 287-amino-acid chain; its full sequence is Shikimate dehydrogenase (NADP(+)) (287 aa).

Residues 20 to 22 (SRS) and threonine 67 each bind shikimate. The Proton acceptor role is filled by lysine 71. Residue glutamate 84 coordinates NADP(+). The shikimate site is built by asparagine 93 and aspartate 108. Residues 132–136 (GAGGA), 156–161 (NRTAAR), and methionine 226 contribute to the NADP(+) site. Tyrosine 228 provides a ligand contact to shikimate. Glycine 250 contacts NADP(+).

This sequence belongs to the shikimate dehydrogenase family. In terms of assembly, homodimer.

The enzyme catalyses shikimate + NADP(+) = 3-dehydroshikimate + NADPH + H(+). It functions in the pathway metabolic intermediate biosynthesis; chorismate biosynthesis; chorismate from D-erythrose 4-phosphate and phosphoenolpyruvate: step 4/7. Functionally, involved in the biosynthesis of the chorismate, which leads to the biosynthesis of aromatic amino acids. Catalyzes the reversible NADPH linked reduction of 3-dehydroshikimate (DHSA) to yield shikimate (SA). In Bordetella bronchiseptica (strain ATCC BAA-588 / NCTC 13252 / RB50) (Alcaligenes bronchisepticus), this protein is Shikimate dehydrogenase (NADP(+)).